We begin with the raw amino-acid sequence, 276 residues long: UPF0328 protein ECU08_2080 (276 aa).

The tract at residues 1 to 24 (MGIIDVQRSHLTATPSKERDAPAH) is disordered.

This sequence belongs to the UPF0328 family.

This chain is UPF0328 protein ECU08_2080, found in Encephalitozoon cuniculi (strain GB-M1) (Microsporidian parasite).